The following is a 119-amino-acid chain: Large ribosomal subunit protein bL20 (119 aa).

This sequence belongs to the bacterial ribosomal protein bL20 family.

Binds directly to 23S ribosomal RNA and is necessary for the in vitro assembly process of the 50S ribosomal subunit. It is not involved in the protein synthesizing functions of that subunit. The chain is Large ribosomal subunit protein bL20 from Shewanella woodyi (strain ATCC 51908 / MS32).